The following is a 300-amino-acid chain: Ribosomal protein L11 methyltransferase (300 aa).

S-adenosyl-L-methionine contacts are provided by threonine 152, glycine 173, aspartate 195, and asparagine 234.

The protein belongs to the methyltransferase superfamily. PrmA family.

It localises to the cytoplasm. The enzyme catalyses L-lysyl-[protein] + 3 S-adenosyl-L-methionine = N(6),N(6),N(6)-trimethyl-L-lysyl-[protein] + 3 S-adenosyl-L-homocysteine + 3 H(+). Its function is as follows. Methylates ribosomal protein L11. In Burkholderia multivorans (strain ATCC 17616 / 249), this protein is Ribosomal protein L11 methyltransferase.